The following is a 208-amino-acid chain: Protein-L-isoaspartate O-methyltransferase (208 aa).

The active site involves Ser-59.

Belongs to the methyltransferase superfamily. L-isoaspartyl/D-aspartyl protein methyltransferase family.

Its subcellular location is the cytoplasm. It carries out the reaction [protein]-L-isoaspartate + S-adenosyl-L-methionine = [protein]-L-isoaspartate alpha-methyl ester + S-adenosyl-L-homocysteine. Catalyzes the methyl esterification of L-isoaspartyl residues in peptides and proteins that result from spontaneous decomposition of normal L-aspartyl and L-asparaginyl residues. It plays a role in the repair and/or degradation of damaged proteins. The chain is Protein-L-isoaspartate O-methyltransferase from Shigella sonnei (strain Ss046).